The sequence spans 391 residues: MAIINMSDLDLQGKRVLIREDLNVPVSNGVVTSDARLRASLPTIELALAKGAAVMVMSHLGRPTEGEYNSEFSMQPVVDYLAKALSCTVRLATDYLDGVEVAVGEVVVFENVRFNKGEKKNDEALSKKMAALCDVYVMDAFGTAHRAEASTNGVGLHAPIACAGPLLAQELEALGKALDNPARPLVAIVGGSKVSTKLTVLESLSGIVDQLVVGGGIANTFIAAAGHNVGKSLYEADLIDEAKRLVANAQSRGGDIPVPTDVVVAGEFSPTAAATLKAVNEVADSDMIFDIGPDSAEALAKIIESAGTIVWNGPVGVFEFDQFGEGTKRIAQAIADSKAFSIAGGGDTLAAVDKYDIADKVSYISTGGGAFLEFLEGKELPAVAMLKQRGA.

Substrate contacts are provided by residues 21–23 (DLN), R36, 59–62 (HLGR), R113, and R146. ATP contacts are provided by residues K197, E319, and 345–348 (GGDT).

Belongs to the phosphoglycerate kinase family. As to quaternary structure, monomer.

The protein localises to the cytoplasm. The catalysed reaction is (2R)-3-phosphoglycerate + ATP = (2R)-3-phospho-glyceroyl phosphate + ADP. It functions in the pathway carbohydrate degradation; glycolysis; pyruvate from D-glyceraldehyde 3-phosphate: step 2/5. The protein is Phosphoglycerate kinase of Shewanella sp. (strain MR-4).